We begin with the raw amino-acid sequence, 162 residues long: B-box zinc finger protein 23 (162 aa).

Zn(2+)-binding residues include cysteine 5, cysteine 8, cysteine 28, histidine 33, cysteine 63, cysteine 66, cysteine 86, and histidine 91. The segment at 5–47 (CEVCEKAEAEVLCCSDEAVLCKPCDIKVHEANKLFQRHHRVAL) adopts a B box-type 1; atypical zinc-finger fold. The B box-type 2; atypical zinc finger occupies 63-101 (CDICQERKGYFFCLEDRAMLCNDCDEAIHTCNSHQRFLL). Residues 137–162 (QYSSEETEAGNSGEIVHKNPSVILSP) form a disordered region.

Its subcellular location is the nucleus. Its function is as follows. Probable transcription factor that may be involved in seedling photomorphogenesis. This Arabidopsis thaliana (Mouse-ear cress) protein is B-box zinc finger protein 23.